A 262-amino-acid polypeptide reads, in one-letter code: Acyl-[acyl-carrier-protein]--UDP-N-acetylglucosamine O-acyltransferase (262 aa).

It belongs to the transferase hexapeptide repeat family. LpxA subfamily. Homotrimer.

The protein localises to the cytoplasm. It catalyses the reaction a (3R)-hydroxyacyl-[ACP] + UDP-N-acetyl-alpha-D-glucosamine = a UDP-3-O-[(3R)-3-hydroxyacyl]-N-acetyl-alpha-D-glucosamine + holo-[ACP]. Its pathway is glycolipid biosynthesis; lipid IV(A) biosynthesis; lipid IV(A) from (3R)-3-hydroxytetradecanoyl-[acyl-carrier-protein] and UDP-N-acetyl-alpha-D-glucosamine: step 1/6. Functionally, involved in the biosynthesis of lipid A, a phosphorylated glycolipid that anchors the lipopolysaccharide to the outer membrane of the cell. The polypeptide is Acyl-[acyl-carrier-protein]--UDP-N-acetylglucosamine O-acyltransferase (Pasteurella multocida (strain Pm70)).